A 2188-amino-acid chain; its full sequence is Phenolphthiocerol/phthiocerol polyketide synthase subunit C (2188 aa).

A Ketosynthase family 3 (KS3) domain is found at 34-462; sequence SEPIAVIGMG…GTNAHVVIEQ (429 aa). Residues Cys210, His345, and His384 each act as for beta-ketoacyl synthase activity in the active site. The acyltransferase stretch occupies residues 572–890; the sequence is VFVYSGRGSQ…NLNTTHTTHP (319 aa). Ser660 functions as the For malonyltransferase activity in the catalytic mechanism. The N-terminal hotdog fold stretch occupies residues 928-1050; it reads HPLLGVGVTD…ATVARAEPLA (123 aa). The interval 928-1093 is dehydratase; sequence HPLLGVGVTD…QQHGPAFQGI (166 aa). The PKS/mFAS DH domain maps to 928–1223; that stretch reads HPLLGVGVTD…MAVLGSGSGA (296 aa). Residue His959 is the Proton acceptor; for dehydratase activity of the active site. The C-terminal hotdog fold stretch occupies residues 1067-1223; it reads EDQLDPDDLY…MAVLGSGSGA (157 aa). The active-site Proton donor; for dehydratase activity is Asp1129. Positions 1467 to 1778 are enoylreductase; that stretch reads GRLDALNVHE…SGKHTGKIVI (312 aa). The beta-ketoacyl reductase stretch occupies residues 1802–1981; it reads GGYLIVGGMG…GINWGPWADV (180 aa). 1803 to 1848 provides a ligand contact to NADP(+); that stretch reads GYLIVGGMGGLGFVVARWLAEQGAGLIVLNGRSAPSDEVAAAIAEL. Residues 2069–2145 form the Carrier domain; sequence ERPGHLASAI…DLATALCERM (77 aa). Ser2105 is modified (O-(pantetheine 4'-phosphoryl)serine).

In terms of assembly, homodimer. Requires NADP(+) as cofactor. The cofactor is pantetheine 4'-phosphate.

The enzyme catalyses icosanoyl-[(phenol)carboxyphthiodiolenone synthase] + 2 (S)-methylmalonyl-CoA + 3 malonyl-CoA + 5 NADPH + 10 H(+) = C32-carboxyphthiodiolenone-[(phenol)carboxyphthiodiolenone synthase] + 5 CO2 + 5 NADP(+) + 5 CoA + 2 H2O. It carries out the reaction docosanoyl-[(phenol)carboxyphthiodiolenone synthase] + 2 (S)-methylmalonyl-CoA + 3 malonyl-CoA + 5 NADPH + 10 H(+) = C34-carboxyphthiodiolenone-[(phenol)carboxyphthiodiolenone synthase] + 5 CO2 + 5 NADP(+) + 5 CoA + 2 H2O. The catalysed reaction is 17-(4-hydroxyphenyl)heptadecanoyl-[(phenol)carboxyphthiodiolenone synthase] + 2 (S)-methylmalonyl-CoA + 3 malonyl-CoA + 5 NADPH + 10 H(+) = C35-(phenol)carboxyphthiodiolenone-[(phenol)carboxyphthiodiolenone synthase] + 5 CO2 + 5 NADP(+) + 5 CoA + 2 H2O. It catalyses the reaction 19-(4-hydroxyphenyl)nonadecanoyl-[(phenol)carboxyphthiodiolenone synthase] + 2 (S)-methylmalonyl-CoA + 3 malonyl-CoA + 5 NADPH + 10 H(+) = C37-(phenol)carboxyphthiodiolenone-[(phenol)carboxyphthiodiolenone synthase] + 5 CO2 + 5 NADP(+) + 5 CoA + 2 H2O. The protein operates within lipid metabolism; fatty acid biosynthesis. Its function is as follows. Part of the PpsABCDE complex involved in the biosynthesis of the lipid core common to phthiocerols and phenolphthiocerols by successive additions of malonyl-CoA or methylmalonyl-CoA extender units. PpsA can accept as substrate the activated forms of either icosanoyl (C20), docosanoyl (C22) or lignoceroyl (C24) groups from FadD26, or a (4-hydroxyphenyl)-C17 or (4-hydroxyphenyl)-C19 fatty acyl from FadD29. PpsA initiates the biosynthesis and extends its substrate using a malonyl-CoA extender unit. The PpsB and PpsC proteins add the second and third malonyl-CoA extender units. PpsD adds an (R)-methylmalonyl unit and PpsE adds a second (R)-methylmalonyl unit. The incorporation of the methylmalonyl units results in formation of two branched methyl groups in the elongated product. The chain is Phenolphthiocerol/phthiocerol polyketide synthase subunit C (ppsC) from Mycobacterium bovis (strain ATCC BAA-935 / AF2122/97).